The following is a 111-amino-acid chain: Resistin-like alpha (111 aa).

An N-terminal signal peptide occupies residues 1–23 (MKTTTCSLLICISLLQLMVPVNT). Cystine bridges form between cysteine 55–cysteine 108, cysteine 67–cysteine 107, cysteine 76–cysteine 93, cysteine 78–cysteine 95, and cysteine 82–cysteine 97.

The protein belongs to the resistin/FIZZ family. Monomer. In terms of tissue distribution, highest levels in adipose tissue.

It is found in the secreted. Functionally, probable hormone. Plays a role in pulmonary vascular remodeling. The protein is Resistin-like alpha (Retnla) of Mus musculus (Mouse).